We begin with the raw amino-acid sequence, 976 residues long: Ubiquitin ligase-binding protein BUL1 (976 aa).

Residues M1–W65 are disordered. A compositionally biased stretch (polar residues) spans S23–T39. Residues S53–S64 show a composition bias toward low complexity. S58 and S70 each carry phosphoserine. Disordered stretches follow at residues L82–I124, P145–T196, and S857–T878. The PY-motif motif lies at F156–Y160. Residues A163–A176 are compositionally biased toward low complexity. Residues D177 to T196 are compositionally biased toward polar residues. Low complexity predominate over residues S862 to T878.

The protein belongs to the BUL1 family. In terms of assembly, component of the RSP5-BUL1/2 ubiquitin ligase complex composed of at least RSP5 and BUL1 or BUL2.

Its subcellular location is the cytoplasm. It functions in the pathway protein modification; protein ubiquitination. Component of a RSP5 ubiquitin ligase complex which specifies polyubiquitination and intracellular trafficking of the general amino acid permease GAP1 as well as other permeases such as PMA1. The RSP5-BUL1/2 complex is also necessary for the heat-shock element (HSE)-mediated gene expression, nitrogen starvation GLN3-dependent transcription and pressure-induced differential regulation of the 2 tryptophan permeases TAT1 and TAT2. The sequence is that of Ubiquitin ligase-binding protein BUL1 (BUL1) from Saccharomyces cerevisiae (strain ATCC 204508 / S288c) (Baker's yeast).